A 408-amino-acid polypeptide reads, in one-letter code: Subtilisin-like protease 6 (408 aa).

Residues 1–20 form the signal peptide; that stretch reads MGFITKAIPIVLAALSTVDG. Residues 21–123 constitute a propeptide that is removed on maturation; that stretch reads AKILEAGPHA…RDTVVKATAI (103 aa). The Inhibitor I9 domain occupies 36–119; the sequence is KYIVVMKQDV…DFIERDTVVK (84 aa). In terms of domain architecture, Peptidase S8 spans 131–408; the sequence is SWGLARVGSK…GKLIYNGSGK (278 aa). Residues D163 and H194 each act as charge relay system in the active site. N-linked (GlcNAc...) asparagine glycosylation is found at N248, N260, and N345. The active-site Charge relay system is S354. N404 carries an N-linked (GlcNAc...) asparagine glycan.

It belongs to the peptidase S8 family.

It localises to the secreted. In terms of biological role, secreted subtilisin-like serine protease with keratinolytic activity that contributes to pathogenicity. The sequence is that of Subtilisin-like protease 6 (SUB6) from Arthroderma gypseum (strain ATCC MYA-4604 / CBS 118893) (Microsporum gypseum).